A 382-amino-acid polypeptide reads, in one-letter code: Galactokinase (382 aa).

34-37 (EHTD) contributes to the substrate binding site. Residue 124–130 (GAGLSSS) participates in ATP binding. Mg(2+) contacts are provided by S130 and E162. D174 functions as the Proton acceptor in the catalytic mechanism. Residue Y223 participates in substrate binding.

Belongs to the GHMP kinase family. GalK subfamily.

It localises to the cytoplasm. The enzyme catalyses alpha-D-galactose + ATP = alpha-D-galactose 1-phosphate + ADP + H(+). The protein operates within carbohydrate metabolism; galactose metabolism. In terms of biological role, catalyzes the transfer of the gamma-phosphate of ATP to D-galactose to form alpha-D-galactose-1-phosphate (Gal-1-P). The chain is Galactokinase from Salmonella schwarzengrund (strain CVM19633).